The primary structure comprises 324 residues: Methionyl-tRNA formyltransferase (324 aa).

A (6S)-5,6,7,8-tetrahydrofolate-binding site is contributed by 112–115; it reads SILP.

This sequence belongs to the Fmt family.

It carries out the reaction L-methionyl-tRNA(fMet) + (6R)-10-formyltetrahydrofolate = N-formyl-L-methionyl-tRNA(fMet) + (6S)-5,6,7,8-tetrahydrofolate + H(+). Its function is as follows. Attaches a formyl group to the free amino group of methionyl-tRNA(fMet). The formyl group appears to play a dual role in the initiator identity of N-formylmethionyl-tRNA by promoting its recognition by IF2 and preventing the misappropriation of this tRNA by the elongation apparatus. This is Methionyl-tRNA formyltransferase from Shewanella loihica (strain ATCC BAA-1088 / PV-4).